Consider the following 438-residue polypeptide: Gamma-glutamyl phosphate reductase (438 aa).

The protein belongs to the gamma-glutamyl phosphate reductase family.

The protein resides in the cytoplasm. It catalyses the reaction L-glutamate 5-semialdehyde + phosphate + NADP(+) = L-glutamyl 5-phosphate + NADPH + H(+). It participates in amino-acid biosynthesis; L-proline biosynthesis; L-glutamate 5-semialdehyde from L-glutamate: step 2/2. In terms of biological role, catalyzes the NADPH-dependent reduction of L-glutamate 5-phosphate into L-glutamate 5-semialdehyde and phosphate. The product spontaneously undergoes cyclization to form 1-pyrroline-5-carboxylate. In Prochlorococcus marinus (strain MIT 9313), this protein is Gamma-glutamyl phosphate reductase.